A 461-amino-acid polypeptide reads, in one-letter code: tRNA modification GTPase MnmE (461 aa).

(6S)-5-formyl-5,6,7,8-tetrahydrofolate is bound by residues Arg27, Glu89, and Arg128. One can recognise a TrmE-type G domain in the interval Gly224 to Phe382. Asn234 lines the K(+) pocket. Residues Asn234–Ser239, Thr253–Thr259, and Asp278–Gly281 each bind GTP. A Mg(2+)-binding site is contributed by Ser238. The K(+) site is built by Thr253, Ile255, and Thr258. Thr259 provides a ligand contact to Mg(2+). Position 461 (Lys461) interacts with (6S)-5-formyl-5,6,7,8-tetrahydrofolate.

Belongs to the TRAFAC class TrmE-Era-EngA-EngB-Septin-like GTPase superfamily. TrmE GTPase family. As to quaternary structure, homodimer. Heterotetramer of two MnmE and two MnmG subunits. The cofactor is K(+).

The protein localises to the cytoplasm. Exhibits a very high intrinsic GTPase hydrolysis rate. Involved in the addition of a carboxymethylaminomethyl (cmnm) group at the wobble position (U34) of certain tRNAs, forming tRNA-cmnm(5)s(2)U34. In Lactobacillus johnsonii (strain CNCM I-12250 / La1 / NCC 533), this protein is tRNA modification GTPase MnmE.